The primary structure comprises 430 residues: MANVVVVGAQWGDEGKGKIVDWLSEQADIVVRFQGGHNAGHTLVINGQTYKLALLPSGVLRPSKLAVIGNGVVFDPQAFLDEVKKLQGQGVAISPENLRIAENVTLILPLHRELDATRENAAKAGAIGTTQRGIGPAYEDKVGRRAIRLMDLADLDTLPTKIERLLAHHNALRRGLGQPEIDAGQILADLSAMAPHLLPYAESVWRLLDIKRREGKRILFEGAQGALLDVDHGTYPYVTSSNTVAAQAATGTGMGPGAVGYVLGICKAYTTRVGAGPFPTELTNEIGEEIGRRGKEFGVNTGRKRRCGWFDAVLVRQTVRTCGIHGLALTKLDILDGFDSVEVCVGYKLDGKEIDYLPAGEGAQARVEPIYETIEGWKEPTANARSWAELPAQAIKYVRRIEELVGCPVALLSTSPEREDTILVQNPFEA.

Residues 12–18 (GDEGKGK) and 40–42 (GHT) each bind GTP. Catalysis depends on Asp13, which acts as the Proton acceptor. Residues Asp13 and Gly40 each contribute to the Mg(2+) site. Residues 13 to 16 (DEGK), 38 to 41 (NAGH), Thr130, Arg144, Gln224, Thr239, and Arg303 contribute to the IMP site. The Proton donor role is filled by His41. 299–305 (VNTGRKR) lines the substrate pocket. GTP is bound by residues Arg305, 331–333 (KLD), and 413–415 (STS).

This sequence belongs to the adenylosuccinate synthetase family. Homodimer. Mg(2+) is required as a cofactor.

It localises to the cytoplasm. It catalyses the reaction IMP + L-aspartate + GTP = N(6)-(1,2-dicarboxyethyl)-AMP + GDP + phosphate + 2 H(+). It participates in purine metabolism; AMP biosynthesis via de novo pathway; AMP from IMP: step 1/2. Functionally, plays an important role in the de novo pathway of purine nucleotide biosynthesis. Catalyzes the first committed step in the biosynthesis of AMP from IMP. The protein is Adenylosuccinate synthetase of Rhodopseudomonas palustris (strain TIE-1).